Here is a 375-residue protein sequence, read N- to C-terminus: 4-hydroxy-3-methylbut-2-en-1-yl diphosphate synthase (flavodoxin) (375 aa).

[4Fe-4S] cluster contacts are provided by C268, C271, C303, and E310.

Belongs to the IspG family. The cofactor is [4Fe-4S] cluster.

It catalyses the reaction (2E)-4-hydroxy-3-methylbut-2-enyl diphosphate + oxidized [flavodoxin] + H2O + 2 H(+) = 2-C-methyl-D-erythritol 2,4-cyclic diphosphate + reduced [flavodoxin]. Its pathway is isoprenoid biosynthesis; isopentenyl diphosphate biosynthesis via DXP pathway; isopentenyl diphosphate from 1-deoxy-D-xylulose 5-phosphate: step 5/6. In terms of biological role, converts 2C-methyl-D-erythritol 2,4-cyclodiphosphate (ME-2,4cPP) into 1-hydroxy-2-methyl-2-(E)-butenyl 4-diphosphate. The chain is 4-hydroxy-3-methylbut-2-en-1-yl diphosphate synthase (flavodoxin) from Bacillus velezensis (strain DSM 23117 / BGSC 10A6 / LMG 26770 / FZB42) (Bacillus amyloliquefaciens subsp. plantarum).